Here is a 431-residue protein sequence, read N- to C-terminus: Serine--tRNA ligase (431 aa).

237-239 (TAE) is an L-serine binding site. 268–270 (RSE) is an ATP binding site. E291 lines the L-serine pocket. 355–358 (EISS) is an ATP binding site. Residue S390 participates in L-serine binding.

The protein belongs to the class-II aminoacyl-tRNA synthetase family. Type-1 seryl-tRNA synthetase subfamily. In terms of assembly, homodimer. The tRNA molecule binds across the dimer.

Its subcellular location is the cytoplasm. It catalyses the reaction tRNA(Ser) + L-serine + ATP = L-seryl-tRNA(Ser) + AMP + diphosphate + H(+). It carries out the reaction tRNA(Sec) + L-serine + ATP = L-seryl-tRNA(Sec) + AMP + diphosphate + H(+). The protein operates within aminoacyl-tRNA biosynthesis; selenocysteinyl-tRNA(Sec) biosynthesis; L-seryl-tRNA(Sec) from L-serine and tRNA(Sec): step 1/1. Its function is as follows. Catalyzes the attachment of serine to tRNA(Ser). Is also able to aminoacylate tRNA(Sec) with serine, to form the misacylated tRNA L-seryl-tRNA(Sec), which will be further converted into selenocysteinyl-tRNA(Sec). This is Serine--tRNA ligase from Neisseria meningitidis serogroup C (strain 053442).